The following is a 248-amino-acid chain: Cyclo(L-leucyl-L-leucyl) synthase (248 aa).

Serine 37 (nucleophile) is an active-site residue. Residues asparagine 40, 180-184 (YVIAE), tyrosine 204, and 209-210 (KL) contribute to the substrate site.

This sequence belongs to the CDPS family. Monomer.

It carries out the reaction 2 L-leucyl-tRNA(Leu) = cyclo(L-leucyl-L-leucyl) + 2 tRNA(Leu) + 2 H(+). Its function is as follows. Involved in the biosynthesis of pulcherrimin, a red extracellular pigment. It uses activated amino acids in the form of aminoacyl-tRNAs (aa-tRNAs) as substrates to catalyze the ATP-independent formation of cyclodipeptides which are intermediates in diketopiperazine (DKP) biosynthetic pathways. Catalyzes the formation of cyclo(L-Leu-L-Leu) (cLL) from L-leucyl-tRNA(Leu). Can also incorporate various nonpolar residues, such as L-phenylalanine, L-leucine and methionine, into cyclodipeptides. This chain is Cyclo(L-leucyl-L-leucyl) synthase (yvmC), found in Bacillus subtilis (strain 168).